Reading from the N-terminus, the 450-residue chain is Chromosomal replication initiator protein DnaA (450 aa).

The domain I, interacts with DnaA modulators stretch occupies residues 1–84; it reads MTENEQIFWN…AVDYVYEEDL (84 aa). A domain II region spans residues 84–109; that stretch reads LIIEQQHQGQQGYTEQAFQQLPAVQS. Residues 110–328 form a domain III, AAA+ region region; it reads DLNPKYSFDN…GALKDISLVA (219 aa). 4 residues coordinate ATP: Gly-154, Gly-156, Lys-157, and Thr-158. The interval 329 to 450 is domain IV, binds dsDNA; the sequence is NFKQIDTITV…EIETIKNKIK (122 aa).

Belongs to the DnaA family. Oligomerizes as a right-handed, spiral filament on DNA at oriC.

It localises to the cytoplasm. Plays an essential role in the initiation and regulation of chromosomal replication. ATP-DnaA binds to the origin of replication (oriC) to initiate formation of the DNA replication initiation complex once per cell cycle. Binds the DnaA box (a 9 base pair repeat at the origin) and separates the double-stranded (ds)DNA. Forms a right-handed helical filament on oriC DNA; dsDNA binds to the exterior of the filament while single-stranded (ss)DNA is stabiized in the filament's interior. The ATP-DnaA-oriC complex binds and stabilizes one strand of the AT-rich DNA unwinding element (DUE), permitting loading of DNA polymerase. After initiation quickly degrades to an ADP-DnaA complex that is not apt for DNA replication. Binds acidic phospholipids. The sequence is that of Chromosomal replication initiator protein DnaA from Streptococcus equi subsp. zooepidemicus (strain MGCS10565).